The chain runs to 143 residues: Large ribosomal subunit protein uL11 (143 aa).

The protein belongs to the universal ribosomal protein uL11 family. Part of the ribosomal stalk of the 50S ribosomal subunit. Interacts with L10 and the large rRNA to form the base of the stalk. L10 forms an elongated spine to which L12 dimers bind in a sequential fashion forming a multimeric L10(L12)X complex. One or more lysine residues are methylated.

Functionally, forms part of the ribosomal stalk which helps the ribosome interact with GTP-bound translation factors. The polypeptide is Large ribosomal subunit protein uL11 (Ralstonia pickettii (strain 12J)).